The chain runs to 711 residues: Polyribonucleotide nucleotidyltransferase (711 aa).

Residues Asp-486 and Asp-492 each contribute to the Mg(2+) site. Positions 553-612 (PRIHTIKISTDKIKDVIGKGGSVIRALTEETGTTIEIEDDGTVKIAATDGEKAKYAIRRI) constitute a KH domain. The S1 motif domain occupies 622–690 (GRIYNGKVTR…RQGRVRLSIK (69 aa)). Residues 689–711 (IKEATEQTQPAAAPEAPTSEQGE) form a disordered region. A compositionally biased stretch (low complexity) spans 694–711 (EQTQPAAAPEAPTSEQGE).

This sequence belongs to the polyribonucleotide nucleotidyltransferase family. In terms of assembly, component of the RNA degradosome, which is a multiprotein complex involved in RNA processing and mRNA degradation. Requires Mg(2+) as cofactor.

Its subcellular location is the cytoplasm. It catalyses the reaction RNA(n+1) + phosphate = RNA(n) + a ribonucleoside 5'-diphosphate. Functionally, involved in mRNA degradation. Catalyzes the phosphorolysis of single-stranded polyribonucleotides processively in the 3'- to 5'-direction. The polypeptide is Polyribonucleotide nucleotidyltransferase (Salmonella arizonae (strain ATCC BAA-731 / CDC346-86 / RSK2980)).